Here is a 308-residue protein sequence, read N- to C-terminus: Elongation factor Ts (308 aa).

The tract at residues 80–83 (TDFV) is involved in Mg(2+) ion dislocation from EF-Tu.

The protein belongs to the EF-Ts family.

The protein resides in the cytoplasm. Associates with the EF-Tu.GDP complex and induces the exchange of GDP to GTP. It remains bound to the aminoacyl-tRNA.EF-Tu.GTP complex up to the GTP hydrolysis stage on the ribosome. The sequence is that of Elongation factor Ts from Rhizobium leguminosarum bv. trifolii (strain WSM2304).